Consider the following 864-residue polypeptide: Translation initiation factor IF-2 (864 aa).

Residues 140 to 171 (DSRSLNTKKENKLKISNKDEQNKKFNQHRESN) are compositionally biased toward basic and acidic residues. Positions 140-179 (DSRSLNTKKENKLKISNKDEQNKKFNQHRESNSFDLNHKK) are disordered. The tr-type G domain maps to 364 to 533 (IRAPVVTIMG…LLQAEMLELK (170 aa)). The segment at 373 to 380 (GHVDHGKT) is G1. 373–380 (GHVDHGKT) is a binding site for GTP. Residues 398 to 402 (GITQN) form a G2 region. Residues 419–422 (DTPG) are G3. GTP is bound by residues 419-423 (DTPGH) and 473-476 (NKID). The G4 stretch occupies residues 473–476 (NKID). Residues 509-511 (SAK) form a G5 region.

The protein belongs to the TRAFAC class translation factor GTPase superfamily. Classic translation factor GTPase family. IF-2 subfamily.

The protein resides in the cytoplasm. Functionally, one of the essential components for the initiation of protein synthesis. Protects formylmethionyl-tRNA from spontaneous hydrolysis and promotes its binding to the 30S ribosomal subunits. Also involved in the hydrolysis of GTP during the formation of the 70S ribosomal complex. The sequence is that of Translation initiation factor IF-2 from Buchnera aphidicola subsp. Acyrthosiphon pisum (strain Tuc7).